The following is a 724-amino-acid chain: Phosphoribosylformylglycinamidine synthase subunit PurL (724 aa).

His-34 is an active-site residue. ATP is bound at residue Tyr-37. Glu-78 provides a ligand contact to Mg(2+). Substrate-binding positions include 79 to 82 (SHNH) and Arg-101. Residue His-80 is the Proton acceptor of the active site. Residue Asp-102 coordinates Mg(2+). Substrate is bound at residue Gln-226. Asp-254 contributes to the Mg(2+) binding site. Substrate is bound at residue 298-300 (ESQ). ATP contacts are provided by Asp-480 and Gly-517. Asn-518 serves as a coordination point for Mg(2+). Ser-520 contacts substrate.

The protein belongs to the FGAMS family. Monomer. Part of the FGAM synthase complex composed of 1 PurL, 1 PurQ and 2 PurS subunits.

Its subcellular location is the cytoplasm. The catalysed reaction is N(2)-formyl-N(1)-(5-phospho-beta-D-ribosyl)glycinamide + L-glutamine + ATP + H2O = 2-formamido-N(1)-(5-O-phospho-beta-D-ribosyl)acetamidine + L-glutamate + ADP + phosphate + H(+). It functions in the pathway purine metabolism; IMP biosynthesis via de novo pathway; 5-amino-1-(5-phospho-D-ribosyl)imidazole from N(2)-formyl-N(1)-(5-phospho-D-ribosyl)glycinamide: step 1/2. Part of the phosphoribosylformylglycinamidine synthase complex involved in the purines biosynthetic pathway. Catalyzes the ATP-dependent conversion of formylglycinamide ribonucleotide (FGAR) and glutamine to yield formylglycinamidine ribonucleotide (FGAM) and glutamate. The FGAM synthase complex is composed of three subunits. PurQ produces an ammonia molecule by converting glutamine to glutamate. PurL transfers the ammonia molecule to FGAR to form FGAM in an ATP-dependent manner. PurS interacts with PurQ and PurL and is thought to assist in the transfer of the ammonia molecule from PurQ to PurL. The sequence is that of Phosphoribosylformylglycinamidine synthase subunit PurL from Methanopyrus kandleri (strain AV19 / DSM 6324 / JCM 9639 / NBRC 100938).